Consider the following 835-residue polypeptide: Outer membrane usher protein FasD (835 aa).

The first 21 residues, methionine 1–alanine 21, serve as a signal peptide directing secretion. A disulfide bridge connects residues cysteine 810 and cysteine 834.

Belongs to the fimbrial export usher family.

The protein localises to the cell outer membrane. In terms of biological role, involved in the export and assembly of the 987P fimbriae subunits across the outer membrane. The sequence is that of Outer membrane usher protein FasD (fasD) from Escherichia coli.